The chain runs to 421 residues: MTKSIQAIRGMSDTLPEEIPYWSFLENACRSVVSAYHYREIRFPVVEQTALFKRTIGEATDIVEKEMYTFTDRNGDSLTLRPEGTAGCVRAGIQNGLFYNQIQRLWYLGPMFRHERPQKGRYRQFYQLGVETYGMAGAPIEAELIFMCLRLWKALGLESCIHLELNTLGTLDSRNAYRQALVTYLQSREKELDEDSRRRLHTNPLRILDSKNPDLQPLLAEAPKLIDYLDETSRRHFDQLRSLLDQAEVPFIVNPTLVRGLDYYTHTVFEWVTDQLGAQGTVCAGGRYDNLVELLGGKSTPAAGFAAGLERLVLLLRGVQECLDKIDIYVVIAGEAVIQEGLLMTEQLRNVLPEWVIEADLSGSSLKSQFKRADKSGAKWALVIGEEEIKTNTVTLKHLRETVPQKNLTRDTLISYLKSEG.

Belongs to the class-II aminoacyl-tRNA synthetase family. In terms of assembly, homodimer.

It is found in the cytoplasm. The enzyme catalyses tRNA(His) + L-histidine + ATP = L-histidyl-tRNA(His) + AMP + diphosphate + H(+). The chain is Histidine--tRNA ligase from Coxiella burnetii (strain CbuG_Q212) (Coxiella burnetii (strain Q212)).